The following is a 514-amino-acid chain: Serine--tRNA ligase, cytoplasmic (514 aa).

M1 bears the N-acetylmethionine mark. Residues 9 to 61 (RVDKGGDPALIRETQEKRFKDPGLVDQLVKADSEWRRCRFRADNLNKLKNLCS) are interaction with tRNA. A Phosphoserine modification is found at S241. L-serine is bound by residues T271 and R302. Residues 302–304 (RQE) and 318–321 (VHQF) contribute to the ATP site. Residue K323 is modified to N6-acetyllysine. E325 is a binding site for L-serine. Position 391 to 394 (391 to 394 (ELVS)) interacts with ATP. Position 427 (N427) interacts with L-serine. The segment at 471 to 514 (VKPAPIDQEPSKKQKKQHEGSKKKAAARDVALESRLQNMEVTDA) is disordered. The segment covering 479–502 (EPSKKQKKQHEGSKKKAAARDVAL) has biased composition (basic and acidic residues). Residues 482-494 (KKQKKQHEGSKKK) carry the Nuclear localization signal motif. Over residues 505-514 (RLQNMEVTDA) the composition is skewed to polar residues.

Belongs to the class-II aminoacyl-tRNA synthetase family. Type-1 seryl-tRNA synthetase subfamily. Homodimer. The tRNA molecule may bind across the dimer. Interacts with SIRT2. Interacts with METTL6; interaction is required for the tRNA N(3)-methylcytidine methyltransferase activity of METTL6.

Its subcellular location is the cytoplasm. It is found in the nucleus. The catalysed reaction is tRNA(Ser) + L-serine + ATP = L-seryl-tRNA(Ser) + AMP + diphosphate + H(+). The enzyme catalyses tRNA(Sec) + L-serine + ATP = L-seryl-tRNA(Sec) + AMP + diphosphate + H(+). Its pathway is aminoacyl-tRNA biosynthesis; selenocysteinyl-tRNA(Sec) biosynthesis; L-seryl-tRNA(Sec) from L-serine and tRNA(Sec): step 1/1. Catalyzes the attachment of serine to tRNA(Ser) in a two-step reaction: serine is first activated by ATP to form Ser-AMP and then transferred to the acceptor end of tRNA(Ser). Is probably also able to aminoacylate tRNA(Sec) with serine, to form the misacylated tRNA L-seryl-tRNA(Sec), which will be further converted into selenocysteinyl-tRNA(Sec). In the nucleus, binds to the VEGFA core promoter and prevents MYC binding and transcriptional activation by MYC. Recruits SIRT2 to the VEGFA promoter, promoting deacetylation of histone H4 at 'Lys-16' (H4K16). Thereby, inhibits the production of VEGFA and sprouting angiogenesis mediated by VEGFA. The protein is Serine--tRNA ligase, cytoplasmic (SARS1) of Macaca fascicularis (Crab-eating macaque).